The sequence spans 962 residues: Splicing regulator ARVCF (962 aa).

Residues 11–46 (SILASVKEQEARFERLTRALEQERRHVALQLERAQQ) are a coiled coil. Residues 95–123 (VTVEEDPGTPTSHVSIVTSEDGTTRRTET) are disordered. Thr103 and Thr105 each carry phosphothreonine. A compositionally biased stretch (polar residues) spans 103 to 115 (TPTSHVSIVTSED). Arg171 carries the post-translational modification Omega-N-methylarginine. 3 disordered regions span residues 233–255 (GRREAFPMGSESGPPSGRSLPEH), 268–291 (RSLAADDEGGPDLEPDYSTATRRR), and 322–357 (AATAPLAQPERGSLGSLDRVVRRSPSVDSTRKEPRW). Phosphoserine is present on Ser269. A compositionally biased stretch (acidic residues) spans 272–282 (ADDEGGPDLEP). 4 positions are modified to phosphoserine: Ser334, Ser337, Ser345, and Ser347. ARM repeat units lie at residues 350–389 (STRKEPRWRDPELPEVLAMLRHPVDPVKANAAAYLQHLCF), 392–431 (EGIKRRVRQLRGLPLLVALLDHPRAEVRRRACGALRNLSY), 435–469 (TDNKAAIRDCGGVPALVRLLRAARDNEVRELVTGT), 470–510 (LWNL…NEDS), 528–567 (LRNVSSDGAEARRRLRECEGLVDALLHALQSAVGRKDTDN), and 577–623 (MRNL…GKKA). Residues 593–618 (RYQEAEPGIPGSTTSQRRRKDDASCF) form a disordered region. A Phosphoserine modification is found at Ser607. Positions 608–624 (QRRRKDDASCFGGKKAK) match the Nuclear localization signal motif. Position 643 is a phosphothreonine (Thr643). ARM repeat units lie at residues 647-687 (PKRT…AAGA), 700-739 (TYIRATVRKERGLPVLVELLQSETDKVVRAVAIALRNLSL), 740-782 (DQRN…AVLN), and 783-827 (TIHE…SHVL). The tract at residues 777-962 (VVAVLNTIHE…TKPQPVDSWV (186 aa)) is required for interaction with RNA-binding proteins DDX5, HNRNPH2 and SRSF1 and with mRNAs. The tract at residues 844-962 (GWTKSRFQSA…TKPQPVDSWV (119 aa)) is disordered. Phosphoserine occurs at positions 864 and 871. The residue at position 872 (Thr872) is a Phosphothreonine. Composition is skewed to basic and acidic residues over residues 878–887 (KSLDGEKSNT) and 920–932 (TSEKELLRPDPGR).

Belongs to the beta-catenin family. As to quaternary structure, component of a ribonucleoprotein complex containing mRNAs and RNA-binding proteins including DDX5, HNRNPH2 and SRSF1 as well as ARVCF. Interacts (via the extreme C-terminus) with FRMPD2 (via the PDZ 2 domain). Interacts with CCDC85B.

Its subcellular location is the cell junction. The protein localises to the adherens junction. The protein resides in the nucleus. It localises to the cytoplasm. Functionally, contributes to the regulation of alternative splicing of pre-mRNAs. In Mus musculus (Mouse), this protein is Splicing regulator ARVCF (Arvcf).